Reading from the N-terminus, the 275-residue chain is 2-dehydro-3-deoxyphosphooctonate aldolase (275 aa).

The protein belongs to the KdsA family.

It localises to the cytoplasm. It carries out the reaction D-arabinose 5-phosphate + phosphoenolpyruvate + H2O = 3-deoxy-alpha-D-manno-2-octulosonate-8-phosphate + phosphate. Its pathway is carbohydrate biosynthesis; 3-deoxy-D-manno-octulosonate biosynthesis; 3-deoxy-D-manno-octulosonate from D-ribulose 5-phosphate: step 2/3. The protein operates within bacterial outer membrane biogenesis; lipopolysaccharide biosynthesis. This Francisella tularensis subsp. holarctica (strain LVS) protein is 2-dehydro-3-deoxyphosphooctonate aldolase.